The chain runs to 295 residues: CRISPR-associated endonuclease Cas1 2 (295 aa).

The Mn(2+) site is built by E155, H215, and E230.

Belongs to the CRISPR-associated endonuclease Cas1 family. As to quaternary structure, homodimer, forms a heterotetramer with a Cas2 homodimer. Requires Mg(2+) as cofactor. Mn(2+) is required as a cofactor.

Its function is as follows. CRISPR (clustered regularly interspaced short palindromic repeat), is an adaptive immune system that provides protection against mobile genetic elements (viruses, transposable elements and conjugative plasmids). CRISPR clusters contain spacers, sequences complementary to antecedent mobile elements, and target invading nucleic acids. CRISPR clusters are transcribed and processed into CRISPR RNA (crRNA). Acts as a dsDNA endonuclease. Involved in the integration of spacer DNA into the CRISPR cassette. In Pyrobaculum aerophilum (strain ATCC 51768 / DSM 7523 / JCM 9630 / CIP 104966 / NBRC 100827 / IM2), this protein is CRISPR-associated endonuclease Cas1 2.